A 290-amino-acid chain; its full sequence is NAD kinase (290 aa).

The active-site Proton acceptor is the Asp72. Residues 72-73 (DG), 146-147 (NE), Arg174, Asp176, and 187-192 (TAYALS) contribute to the NAD(+) site.

The protein belongs to the NAD kinase family. The cofactor is a divalent metal cation.

The protein resides in the cytoplasm. The catalysed reaction is NAD(+) + ATP = ADP + NADP(+) + H(+). In terms of biological role, involved in the regulation of the intracellular balance of NAD and NADP, and is a key enzyme in the biosynthesis of NADP. Catalyzes specifically the phosphorylation on 2'-hydroxyl of the adenosine moiety of NAD to yield NADP. In Methylococcus capsulatus (strain ATCC 33009 / NCIMB 11132 / Bath), this protein is NAD kinase.